A 396-amino-acid polypeptide reads, in one-letter code: Elongation factor Tu 1 (396 aa).

Residues 10-206 (KLHVNVGTIG…ALDTFIPDPT (197 aa)) form the tr-type G domain. The tract at residues 19–26 (GHVDHGKT) is G1. Position 19 to 26 (19 to 26 (GHVDHGKT)) interacts with GTP. Mg(2+) is bound at residue threonine 26. The tract at residues 60–64 (GITIS) is G2. Positions 81-84 (DCPG) are G3. Residues 81 to 85 (DCPGH) and 136 to 139 (NKAD) each bind GTP. Residues 136–139 (NKAD) form a G4 region. The interval 174–176 (SAR) is G5.

The protein belongs to the TRAFAC class translation factor GTPase superfamily. Classic translation factor GTPase family. EF-Tu/EF-1A subfamily. In terms of assembly, monomer.

It localises to the cytoplasm. It catalyses the reaction GTP + H2O = GDP + phosphate + H(+). In terms of biological role, GTP hydrolase that promotes the GTP-dependent binding of aminoacyl-tRNA to the A-site of ribosomes during protein biosynthesis. This chain is Elongation factor Tu 1, found in Xanthomonas campestris pv. campestris (strain B100).